A 99-amino-acid chain; its full sequence is A-type ATP synthase subunit F (99 aa).

This sequence belongs to the V-ATPase F subunit family. In terms of assembly, has multiple subunits with at least A(3), B(3), C, D, E, F, H, I and proteolipid K(x).

The protein resides in the cell membrane. In terms of biological role, component of the A-type ATP synthase that produces ATP from ADP in the presence of a proton gradient across the membrane. This chain is A-type ATP synthase subunit F, found in Methanococcus aeolicus (strain ATCC BAA-1280 / DSM 17508 / OCM 812 / Nankai-3).